A 1438-amino-acid polypeptide reads, in one-letter code: MAMTNQEKFKVLADQIKVSNQLDQTIIEKGELTRVDVSNKNRTWEFQITLPYFLSHEDYLIFTNAITEEFKEIAKVDWHFTIQDTSNQDEHAIKYFGHCIEHTALSPKVKGQLKQKRLIMSGNVLKVMTSNDIERNHFDKVCNGSLVKAFRKCGFDIDKVVFETDDSSSYDDLASLEAHIQEEDEKSAREATEKIEKIKAEKAKQQDNNESNVDKCQIGKPIQIDNIKPIESIIEEEFKVAIEGVIFDINLKELKSGRHIVELKVTDYTDSLVLKMFTRKNKDDLDHFKALSVGKWVRAQGRIEEDTFVRDLVMMMTDIEEIKKTPKQDKAEEKRVEFHLHTSMSQMDGIPNISAYVNQAAKWGHKAIAVTDHNVVQAFPDAHGAAEKNGIKMIYGMEGMLVDDGVPIAYKPTDRDLKEATYVVFDVETTGLSNQYDQIIELAAVKVKDGEIIDKFERFSNPHEKLSETIINLTHITDDMLTDAPEIEEVLTEFKEWVGDAIFVAHNASFDMGFIDTGYERLGFGPSTNGVIDTLELSRTINTEYGKHGLNFLAKKYGVELTQHHRAIYDTESTAYIFIKMVQQMKELGVTNHKDINQKLSNEDAYKRARPTHVTLIVQTQEGLKNLFKIVSASLVKYYYRTPRIPRSLLNEYREGILVGTACDEGELFTAVMQRDQSEVEKIAKYYDFIEVQPPKLYQDLIDRELIRDTETLYEIYERILKAGESTGIPVIATGNAHYLYEHDAIARKILIASQPGNPLNRSTLPEAHFRTTDEMLDEFHFLGEEKAHEIVVKNTNELADRIEKVIPIKDQLFTPRMDGANEEIRELSYTNAKKLYGEDLPQIVIDRLEKELASIIGNGFSVIYLISQRLVKKSLDDGYLVGSRGSVGSSFVATMTEITEVNPLPPHYICPNCKTSEFFDDGSVGSGFDLPDKQCSTCGAELIKEGQDIPFETFLGFKGDKVPDIDLNFSGEYQPNAHNYTKVLFGEDKVFRAGTIGTVAEKTAFGYVKGYLNDQGIHKRGAEIDRLVKGCTGVKRTTGQHPGGIIVVPDYMDIYDFTPIQYPADDQSASWMTTHFDFHSIHDNVLKLDILGHDDPTMIRMLQDLSGIDPKTIPVDDKETMQIFSSPESLGVTEEEILCKTGTFGVPEFGTGFVRQMLEDTKPTTFSELVQISGLSHGTDVWLGNAQELIRSGICDLSSVIGCRDDIMVYLMYAGLEPSMAFKTMESVRKGKGLTEEMIDAMKENNVPDWYLDSCLKIKYMFPKAHAAAYVLMAVRIAYFKVHHPLYYYASYFTIRASDFDLITMIKDKESIKNTVKDMYSRYMDLGKKEKDVLTVLEIMNEMAHRGFRMQPISLEKSQAFDFIIEGDTLIPPFISVPGLGENVAKRIVEAREDGPFLSKEDLNKKAGLSQKIIEYLDDLGSLPNLPDKAQLSIFDM.

The 157-residue stretch at 422-578 folds into the Exonuclease domain; the sequence is YVVFDVETTG…YDTESTAYIF (157 aa).

The protein belongs to the DNA polymerase type-C family. PolC subfamily.

The protein localises to the cytoplasm. It catalyses the reaction DNA(n) + a 2'-deoxyribonucleoside 5'-triphosphate = DNA(n+1) + diphosphate. In terms of biological role, required for replicative DNA synthesis. This DNA polymerase also exhibits 3' to 5' exonuclease activity. The chain is DNA polymerase III PolC-type from Staphylococcus haemolyticus (strain JCSC1435).